The chain runs to 350 residues: Ribosomal RNA small subunit methyltransferase C (350 aa).

It belongs to the methyltransferase superfamily. RsmC family. As to quaternary structure, monomer.

Its subcellular location is the cytoplasm. The catalysed reaction is guanosine(1207) in 16S rRNA + S-adenosyl-L-methionine = N(2)-methylguanosine(1207) in 16S rRNA + S-adenosyl-L-homocysteine + H(+). In terms of biological role, specifically methylates the guanine in position 1207 of 16S rRNA in the 30S particle. The sequence is that of Ribosomal RNA small subunit methyltransferase C from Sodalis glossinidius (strain morsitans).